The chain runs to 232 residues: Ion-translocating oxidoreductase complex subunit E (232 aa).

5 helical membrane-spanning segments follow: residues leucine 39–valine 59, isoleucine 69–alanine 89, glycine 93–glycine 113, alanine 128–threonine 148, and serine 182–leucine 202.

Belongs to the NqrDE/RnfAE family. As to quaternary structure, the complex is composed of six subunits: RnfA, RnfB, RnfC, RnfD, RnfE and RnfG.

The protein localises to the cell inner membrane. Part of a membrane-bound complex that couples electron transfer with translocation of ions across the membrane. This chain is Ion-translocating oxidoreductase complex subunit E, found in Shewanella oneidensis (strain ATCC 700550 / JCM 31522 / CIP 106686 / LMG 19005 / NCIMB 14063 / MR-1).